The following is a 562-amino-acid chain: Tetratricopeptide repeat protein 39A (562 aa).

TPR repeat units follow at residues 273–306 (AIFL…QQNW), 463–496 (CVVK…EKRI), and 504–537 (PNAM…YKNY).

This sequence belongs to the TTC39 family.

The chain is Tetratricopeptide repeat protein 39A (ttc39a) from Xenopus tropicalis (Western clawed frog).